Consider the following 441-residue polypeptide: Cobyrinate a,c-diamide synthase (441 aa).

Residues 243-434 enclose the GATase cobBQ-type domain; it reads TVAVADDAAF…AHVHPESTAF (192 aa). Cys323 (nucleophile) is an active-site residue.

Belongs to the CobB/CbiA family. Mg(2+) is required as a cofactor.

The enzyme catalyses cob(II)yrinate + 2 L-glutamine + 2 ATP + 2 H2O = cob(II)yrinate a,c diamide + 2 L-glutamate + 2 ADP + 2 phosphate + 2 H(+). The protein operates within cofactor biosynthesis; adenosylcobalamin biosynthesis; cob(II)yrinate a,c-diamide from sirohydrochlorin (anaerobic route): step 10/10. Functionally, catalyzes the ATP-dependent amidation of the two carboxylate groups at positions a and c of cobyrinate, using either L-glutamine or ammonia as the nitrogen source. The chain is Cobyrinate a,c-diamide synthase from Halobacterium salinarum (strain ATCC 700922 / JCM 11081 / NRC-1) (Halobacterium halobium).